We begin with the raw amino-acid sequence, 183 residues long: Beta-defensin 129 (183 aa).

An N-terminal signal peptide occupies residues 1–19 (MKLLFPIFASLMLQYQVNT). Disulfide bonds link cysteine 27-cysteine 53, cysteine 34-cysteine 48, and cysteine 38-cysteine 54. The segment at 141–183 (TATSTKSNTKESRDSATASSPPAPPPPNILPTPSLELEEAEEQ) is disordered. The segment covering 161-170 (PPAPPPPNIL) has biased composition (pro residues).

The protein belongs to the beta-defensin family.

Its subcellular location is the secreted. In terms of biological role, has antibacterial activity. This is Beta-defensin 129 (DEFB129) from Gorilla gorilla gorilla (Western lowland gorilla).